Reading from the N-terminus, the 218-residue chain is N-(5'-phosphoribosyl)anthranilate isomerase (218 aa).

The protein belongs to the TrpF family.

The enzyme catalyses N-(5-phospho-beta-D-ribosyl)anthranilate = 1-(2-carboxyphenylamino)-1-deoxy-D-ribulose 5-phosphate. Its pathway is amino-acid biosynthesis; L-tryptophan biosynthesis; L-tryptophan from chorismate: step 3/5. This is N-(5'-phosphoribosyl)anthranilate isomerase from Bacillus licheniformis (strain ATCC 14580 / DSM 13 / JCM 2505 / CCUG 7422 / NBRC 12200 / NCIMB 9375 / NCTC 10341 / NRRL NRS-1264 / Gibson 46).